Consider the following 271-residue polypeptide: Type III pantothenate kinase (271 aa).

Position 6–13 (6–13) interacts with ATP; sequence DVRNTNIV. 109-112 contacts substrate; it reads GADR. Residue Asp-111 is the Proton acceptor of the active site. Residue Asp-131 participates in K(+) binding. Thr-134 contacts ATP. A substrate-binding site is contributed by Thr-186.

This sequence belongs to the type III pantothenate kinase family. As to quaternary structure, homodimer. NH4(+) is required as a cofactor. The cofactor is K(+).

Its subcellular location is the cytoplasm. It catalyses the reaction (R)-pantothenate + ATP = (R)-4'-phosphopantothenate + ADP + H(+). It functions in the pathway cofactor biosynthesis; coenzyme A biosynthesis; CoA from (R)-pantothenate: step 1/5. Functionally, catalyzes the phosphorylation of pantothenate (Pan), the first step in CoA biosynthesis. The chain is Type III pantothenate kinase from Rhodococcus erythropolis (strain PR4 / NBRC 100887).